The primary structure comprises 139 residues: Nucleoside diphosphate kinase (139 aa).

Residues Lys10, Phe58, Arg86, Thr92, Arg103, and Asn113 each contribute to the ATP site. His116 acts as the Pros-phosphohistidine intermediate in catalysis.

It belongs to the NDK family. As to quaternary structure, homotetramer. Requires Mg(2+) as cofactor.

The protein localises to the cytoplasm. The enzyme catalyses a 2'-deoxyribonucleoside 5'-diphosphate + ATP = a 2'-deoxyribonucleoside 5'-triphosphate + ADP. It catalyses the reaction a ribonucleoside 5'-diphosphate + ATP = a ribonucleoside 5'-triphosphate + ADP. Its function is as follows. Major role in the synthesis of nucleoside triphosphates other than ATP. The ATP gamma phosphate is transferred to the NDP beta phosphate via a ping-pong mechanism, using a phosphorylated active-site intermediate. This Desulfovibrio desulfuricans (strain ATCC 27774 / DSM 6949 / MB) protein is Nucleoside diphosphate kinase.